The sequence spans 210 residues: Mating-type-like protein A1 (210 aa).

A DNA-binding region (homeobox) is located at residues 141–200 (SKKKRQRLDNSTKEFLEKVFEKNKQPNRRERELIAEKHGVSLSQIRVWFTNKRMRKKEPK).

The protein belongs to the MATA1 family. As to quaternary structure, forms a heterodimer with ALPHA2.

It is found in the nucleus. In terms of biological role, mating type proteins are sequence specific DNA-binding proteins that act as master switches in yeast differentiation by controlling gene expression in a cell type-specific fashion. Transcriptional corepressor that acts in conjunction with ALPHA2 to repress transcription both of homozygote-specific genes and of genes necessary for the white-opaque switch, a prerequisite for mating. In Candida albicans (strain SC5314 / ATCC MYA-2876) (Yeast), this protein is Mating-type-like protein A1 (MTLA1).